The chain runs to 215 residues: 3-demethoxyubiquinol 3-hydroxylase (215 aa).

Glutamate 64, glutamate 94, histidine 97, glutamate 146, glutamate 178, and histidine 181 together coordinate Fe cation.

It belongs to the COQ7 family. Fe cation serves as cofactor.

It is found in the cell membrane. The catalysed reaction is a 5-methoxy-2-methyl-3-(all-trans-polyprenyl)benzene-1,4-diol + AH2 + O2 = a 3-demethylubiquinol + A + H2O. It participates in cofactor biosynthesis; ubiquinone biosynthesis. Catalyzes the hydroxylation of 2-nonaprenyl-3-methyl-6-methoxy-1,4-benzoquinol during ubiquinone biosynthesis. This is 3-demethoxyubiquinol 3-hydroxylase from Coxiella burnetii (strain Dugway 5J108-111).